The sequence spans 82 residues: Toxin TdNa6 (82 aa).

Positions 1–20 are cleaved as a signal peptide; sequence MKGMIMLISCLMLIEVVVGG. The LCN-type CS-alpha/beta domain occupies 21–82; that stretch reads KEGYLLDRSN…KMWHLKTNKC (62 aa). Disulfide bonds link Cys32–Cys82, Cys36–Cys58, Cys44–Cys63, and Cys48–Cys65.

This sequence belongs to the long (4 C-C) scorpion toxin superfamily. Sodium channel inhibitor family. Beta subfamily. As to expression, expressed by the venom gland.

It is found in the secreted. In terms of biological role, beta toxins bind voltage-independently at site-4 of sodium channels (Nav) and shift the voltage of activation toward more negative potentials thereby affecting sodium channel activation and promoting spontaneous and repetitive firing. Is toxic to arthropods. This Tityus discrepans (Venezuelan scorpion) protein is Toxin TdNa6.